A 660-amino-acid chain; its full sequence is Potassium voltage-gated channel subfamily KQT member 1 (660 aa).

Residues 1 to 18 (MSSEVKSRWSGSGSQKSG) show a composition bias toward polar residues. Positions 1 to 67 (MSSEVKSRWS…PESRAADSRA (67 aa)) are disordered. Topologically, residues 1–113 (MSSEVKSRWS…YNFLERPTGW (113 aa)) are cytoplasmic. The span at 53–67 (STDKNPESRAADSRA) shows a compositional bias: basic and acidic residues. A helical membrane pass occupies residues 114–135 (KCFIYHFTVFLIVLVCLIFSVM). Topologically, residues 136 to 146 (STIEQYHYFAN) are extracellular. Residues 147–169 (RALVWMEIVLVVFFGTEYIVRLW) form a helical membrane-spanning segment. The Cytoplasmic portion of the chain corresponds to 170–185 (SAGCRSKYVGFWGRLR). A helical transmembrane segment spans residues 186–211 (FARKPISIIDLIVVVASVIVLCVGSN). Topologically, residues 212 to 219 (GQVFATSA) are extracellular. A helical; Voltage-sensor transmembrane segment spans residues 220 to 235 (IRGIRFLQILRMLHVD). At 236–253 (RQGGTWRLLGSVVFIHRQ) the chain is on the cytoplasmic side. Glutamine 237 lines the a 1,2-diacyl-sn-glycero-3-phospho-(1D-myo-inositol-4,5-bisphosphate) pocket. Residues 254 to 276 (ELITTLYIGFLGLIFSSYFVYLA) traverse the membrane as a helical segment. The Extracellular portion of the chain corresponds to 277-292 (EKDAVDDSGSQQFGSY). The pore-forming intramembrane region spans 293-313 (ADALWWGVVTVTTIGYGDKVP). The Extracellular portion of the chain corresponds to 314–315 (QT). The chain crosses the membrane as a helical span at residues 316-341 (WIGRTIASCFSVFAISFFALPAGILG). Topologically, residues 342-660 (SGFALKVQQK…RKDQDNQPDL (319 aa)) are cytoplasmic. The interval 399 to 426 (SPSPKTKKSVGKRKKLKTDKDNGLNSEK) is disordered. The span at 403–415 (KTKKSVGKRKKLK) shows a compositional bias: basic residues. A coiled-coil region spans residues 579–615 (KNTIGARLNRVEEKFVHMDQKLNTITDMLHHLVAHQQ).

This sequence belongs to the potassium channel family. KQT (TC 1.A.1.15) subfamily. Kv7.1/KCNQ1 sub-subfamily. In terms of assembly, tetramer. Heterotetramer with KCNE1; targets to the membrane raft. Interacts (via C-terminus) with CALM; forms a heterotetramer in a calcium-independent manner. Interacts with KCNE2; form a heterooligomer complex that targets to the membrane raft and leading to currents with an apparently instantaneous activation, a rapid deactivation process and a linear current-voltage relationship and decreases the amplitude of the outward current. Interacts with KCNE3; four KCNE3 molecules are bound to one KCNQ1 tetramer (4:4 KCNQ1:KCNE3 stoichiometry); alters membrane raft localization; affects KCNQ1 structure and gating properties. Interacts with KCNE4; impairs KCNQ1 localization in lipid rafts and inhibits voltage-gated potassium channel activity. Interacts with KCNE5; impairs KCNQ1 localization in lipid rafts and only conducts current upon strong and continued depolarization. Expressed only in rectal gland and heart. Faintly expressed in intestine. Undetectable in kidney, brain, testis, liver and gills.

It localises to the cell membrane. It is found in the cytoplasmic vesicle membrane. Its subcellular location is the membrane raft. The protein resides in the endoplasmic reticulum. The protein localises to the basolateral cell membrane. The catalysed reaction is K(+)(in) = K(+)(out). Its activity is regulated as follows. PIP2 molecule is essential to activate KCNQ channels by inducing the coupling of the voltage-sensing domain (VSD) and the pore-forming domain (PD). Upon channel activation, PIP2 disrupts the VSD-calmodulin/CALM interactions, causing the release of CALM from the VSD which triggers the opening of the gate. Calcium potentiates KCNQ1 channel current through calcium-bound CALM. Calcium-bound CALM competes with PIP2 to stabilize the channel open state. Functionally, pore-forming subunit of the voltage-gated potassium (Kv) channel involved in the regulation of cardiomyocyte excitability and important in normal development and functions of myocardium, inner ear, stomach and colon. Associates with KCNE beta subunits that modulates current kinetics. Induces a voltage-dependent by rapidly activating and slowly deactivating potassium-selective outward current. Also promotes a delayed voltage activated potassium current showing outward rectification characteristic. During beta-adrenergic receptor stimulation participates in cardiac repolarization by associating with KCNE1 to form the I(Ks) cardiac potassium current that increases the amplitude and slows down the activation kinetics of outward potassium current I(Ks). When associated with KCNE3, forms the potassium channel that is important for cyclic AMP-stimulated intestinal secretion of chloride ions. When associated with KCNE2, forms a heterooligomer complex leading to currents with an apparently instantaneous activation, a rapid deactivation process and a linear current-voltage relationship and decreases the amplitude of the outward current. When associated with KCNE4, inhibits voltage-gated potassium channel activity. When associated with KCNE5, this complex only conducts current upon strong and continued depolarization. This is Potassium voltage-gated channel subfamily KQT member 1 from Squalus acanthias (Spiny dogfish).